The chain runs to 393 residues: Formate-dependent phosphoribosylglycinamide formyltransferase (393 aa).

Residues 17 to 18 (EL) and Glu-77 each bind N(1)-(5-phospho-beta-D-ribosyl)glycinamide. ATP is bound by residues Arg-109, Lys-150, 155-160 (SSGKGQ), 190-193 (EEFL), and Glu-198. The ATP-grasp domain maps to 114–304 (DLAAGELGLR…EFELHLRAVL (191 aa)). Positions 263 and 275 each coordinate Mg(2+). N(1)-(5-phospho-beta-D-ribosyl)glycinamide-binding positions include Asp-282, Lys-354, and 361–362 (RR).

Belongs to the PurK/PurT family. Homodimer.

The enzyme catalyses N(1)-(5-phospho-beta-D-ribosyl)glycinamide + formate + ATP = N(2)-formyl-N(1)-(5-phospho-beta-D-ribosyl)glycinamide + ADP + phosphate + H(+). It functions in the pathway purine metabolism; IMP biosynthesis via de novo pathway; N(2)-formyl-N(1)-(5-phospho-D-ribosyl)glycinamide from N(1)-(5-phospho-D-ribosyl)glycinamide (formate route): step 1/1. Its function is as follows. Involved in the de novo purine biosynthesis. Catalyzes the transfer of formate to 5-phospho-ribosyl-glycinamide (GAR), producing 5-phospho-ribosyl-N-formylglycinamide (FGAR). Formate is provided by PurU via hydrolysis of 10-formyl-tetrahydrofolate. This chain is Formate-dependent phosphoribosylglycinamide formyltransferase, found in Synechococcus sp. (strain RCC307).